We begin with the raw amino-acid sequence, 86 residues long: Small ribosomal subunit protein uS15 (86 aa).

The protein belongs to the universal ribosomal protein uS15 family. As to quaternary structure, part of the 30S ribosomal subunit. Forms a bridge to the 50S subunit in the 70S ribosome, contacting the 23S rRNA.

Functionally, one of the primary rRNA binding proteins, it binds directly to 16S rRNA where it helps nucleate assembly of the platform of the 30S subunit by binding and bridging several RNA helices of the 16S rRNA. Forms an intersubunit bridge (bridge B4) with the 23S rRNA of the 50S subunit in the ribosome. This is Small ribosomal subunit protein uS15 from Ruthia magnifica subsp. Calyptogena magnifica.